The primary structure comprises 379 residues: 2-methylcitrate synthase (379 aa).

Residue H187 participates in substrate binding. H222 is a catalytic residue. 264–268 provides a ligand contact to CoA; the sequence is KVMGF. H270 is an active-site residue. R279 contacts substrate. The active site involves D321. Substrate contacts are provided by R346 and R365.

It belongs to the citrate synthase family. In terms of assembly, homodimer.

The catalysed reaction is propanoyl-CoA + oxaloacetate + H2O = (2S,3S)-2-methylcitrate + CoA + H(+). It carries out the reaction oxaloacetate + acetyl-CoA + H2O = citrate + CoA + H(+). The protein operates within organic acid metabolism; propanoate degradation. It participates in carbohydrate metabolism; tricarboxylic acid cycle; isocitrate from oxaloacetate: step 1/2. In terms of biological role, involved in the catabolism of short chain fatty acids (SCFA) via the tricarboxylic acid (TCA)(acetyl degradation route) and via the 2-methylcitrate cycle I (propionate degradation route). Catalyzes the Claisen condensation of propionyl-CoA and oxaloacetate (OAA) to yield 2-methylcitrate (2-MC) and CoA. Also catalyzes the condensation of oxaloacetate with acetyl-CoA but with a lower specificity. The chain is 2-methylcitrate synthase (gltA) from Antarctic bacterium DS2-3R.